Consider the following 1171-residue polypeptide: Myosin-B/C (1171 aa).

In terms of domain architecture, Myosin motor spans 105–780 (ETVDDIGYLP…AAKELSILQR (676 aa)). 199 to 206 (GESGAGKT) serves as a coordination point for ATP. The tract at residues 671–681 (AHFIRCLKPNE) is actin-binding. Residues 810 to 1171 (IHFLTRLESN…CFEACAPDRP (362 aa)) form a tail region.

The protein belongs to the TRAFAC class myosin-kinesin ATPase superfamily. Myosin family.

The protein resides in the cytoplasm. Its function is as follows. Myosins are actin-based motor molecules with ATPase activity. Unconventional myosins serve in intracellular movements. Their highly divergent tails are presumed to bind to membranous compartments, which would be moved relative to actin filaments. Plays a role in proper daughter cell budding and separation. This Toxoplasma gondii protein is Myosin-B/C.